Here is a 207-residue protein sequence, read N- to C-terminus: Probable HTH-type transcriptional regulator YttP (207 aa).

The region spanning 3 to 63 (VSTKDKIIES…HLVSEFYEGY (61 aa)) is the HTH tetR-type domain. Positions 26 to 45 (SVREIAKSADVNVAHISYYF) form a DNA-binding region, H-T-H motif.

The protein is Probable HTH-type transcriptional regulator YttP (yttP) of Bacillus subtilis (strain 168).